We begin with the raw amino-acid sequence, 518 residues long: Arginyl-tRNA--protein transferase 1 (518 aa).

Residues E149–E165 are compositionally biased toward basic and acidic residues. The disordered stretch occupies residues E149 to K207. S169 bears the Phosphoserine mark.

This sequence belongs to the R-transferase family. In terms of assembly, monomer. Interacts with LIAT1; LIAT1 is not a substrate of ATE1, the interaction takes place in the cytoplasm and seems to increase ATE1 arginyltransferase activity.

The protein resides in the nucleus. The protein localises to the cytoplasm. The enzyme catalyses an N-terminal L-alpha-aminoacyl-[protein] + L-arginyl-tRNA(Arg) = an N-terminal L-arginyl-L-aminoacyl-[protein] + tRNA(Arg) + H(+). Functionally, involved in the post-translational conjugation of arginine to the N-terminal aspartate or glutamate of a protein. This arginylation is required for degradation of the protein via the ubiquitin pathway. Does not arginylate cysteine residues. In Macaca fascicularis (Crab-eating macaque), this protein is Arginyl-tRNA--protein transferase 1 (ATE1).